The following is a 569-amino-acid chain: Proline--tRNA ligase (569 aa).

The protein belongs to the class-II aminoacyl-tRNA synthetase family. ProS type 1 subfamily. In terms of assembly, homodimer.

It is found in the cytoplasm. It catalyses the reaction tRNA(Pro) + L-proline + ATP = L-prolyl-tRNA(Pro) + AMP + diphosphate. Catalyzes the attachment of proline to tRNA(Pro) in a two-step reaction: proline is first activated by ATP to form Pro-AMP and then transferred to the acceptor end of tRNA(Pro). As ProRS can inadvertently accommodate and process non-cognate amino acids such as alanine and cysteine, to avoid such errors it has two additional distinct editing activities against alanine. One activity is designated as 'pretransfer' editing and involves the tRNA(Pro)-independent hydrolysis of activated Ala-AMP. The other activity is designated 'posttransfer' editing and involves deacylation of mischarged Ala-tRNA(Pro). The misacylated Cys-tRNA(Pro) is not edited by ProRS. This is Proline--tRNA ligase from Dehalococcoides mccartyi (strain ATCC BAA-2100 / JCM 16839 / KCTC 5957 / BAV1).